The chain runs to 492 residues: 3-octaprenyl-4-hydroxybenzoate carboxy-lyase (492 aa).

Asparagine 177 provides a ligand contact to Mn(2+). Prenylated FMN contacts are provided by residues 180–182 (IYR), 194–196 (RWL), and 199–200 (RG). Glutamate 243 contributes to the Mn(2+) binding site. The active-site Proton donor is the aspartate 292.

It belongs to the UbiD family. As to quaternary structure, homohexamer. Requires prenylated FMN as cofactor. Mn(2+) is required as a cofactor.

Its subcellular location is the cell membrane. It catalyses the reaction a 4-hydroxy-3-(all-trans-polyprenyl)benzoate + H(+) = a 2-(all-trans-polyprenyl)phenol + CO2. Its pathway is cofactor biosynthesis; ubiquinone biosynthesis. Its function is as follows. Catalyzes the decarboxylation of 3-octaprenyl-4-hydroxy benzoate to 2-octaprenylphenol, an intermediate step in ubiquinone biosynthesis. The sequence is that of 3-octaprenyl-4-hydroxybenzoate carboxy-lyase from Neisseria meningitidis serogroup A / serotype 4A (strain DSM 15465 / Z2491).